A 161-amino-acid polypeptide reads, in one-letter code: Glutaredoxin-2, mitochondrial (161 aa).

A mitochondrion-targeting transit peptide spans 1–19; it reads MLWRRAALAGTRLVWSRSG. S20 carries the post-translational modification Phosphoserine. Positions 54 to 154 constitute a Glutaredoxin domain; that stretch reads VNQIQETISD…PLVHQCYLKK (101 aa). A [2Fe-2S] cluster-binding site is contributed by C65. K71 is a glutathione binding site. C74 bears the S-glutathionyl cysteine; alternate mark. Cysteines 74 and 77 form a disulfide. Residues Q106 and V118 each contribute to the glutathione site. Position 150 (C150) interacts with [2Fe-2S] cluster.

Belongs to the glutaredoxin family. As to quaternary structure, monomer; active form. Homodimer; inactive form. The homodimer is probably linked by 1 2Fe-2S cluster.

It localises to the mitochondrion. Its activity is regulated as follows. The 2Fe-2S present in the homodimer leads to inactivation of the enzyme. The 2Fe-2S may serve as a redox sensor: the presence of one-electron oxidants or reductants leading to the loss of the 2Fe-2S cluster, subsequent monomerization and activation of the enzyme. Functionally, glutathione-dependent oxidoreductase that facilitates the maintenance of mitochondrial redox homeostasis upon induction of apoptosis by oxidative stress. Involved in response to hydrogen peroxide and regulation of apoptosis caused by oxidative stress. Acts as a very efficient catalyst of monothiol reactions because of its high affinity for protein glutathione-mixed disulfides. Can receive electrons not only from glutathione (GSH), but also from thioredoxin reductase supporting both monothiol and dithiol reactions. Efficiently catalyzes both glutathionylation and deglutathionylation of mitochondrial complex I, which in turn regulates the superoxide production by the complex. Overexpression decreases the susceptibility to apoptosis and prevents loss of cardiolipin and cytochrome c release. This Pongo abelii (Sumatran orangutan) protein is Glutaredoxin-2, mitochondrial (GLRX2).